The primary structure comprises 107 residues: Cytochrome c2 (107 aa).

Gln1 bears the Pyrrolidone carboxylic acid mark. Cys13, Cys16, His17, and Met79 together coordinate heme c.

This sequence belongs to the cytochrome c family. Post-translationally, binds 1 heme c group covalently per subunit.

The protein localises to the periplasm. Its function is as follows. Cytochrome c2 is found mainly in purple, non-sulfur, photosynthetic bacteria where it functions as the electron donor to the oxidized bacteriochlorophyll in the photophosphorylation pathway. However, it may also have a role in the respiratory chain and is found in some non-photosynthetic bacteria. The protein is Cytochrome c2 of Rhodoplanes tepidamans (Rhodoplanes cryptolactis).